A 1403-amino-acid chain; its full sequence is MAEHGESSEDRISEIDYEFLPELSALLGVDAVQLAKSQEEEEHKERMKMKKGFNSQMRSEAKRLKTFETYDTFRSWTPQEMAAAGFYHTGVKLGVQCFCCSLILFGNSLRKLPIERHKKLRPECEFLQGKDVGNIGKYDIRVKSPEKMLRGGKARYHEEEARLESFEDWPFYAHGTSPRVLSAAGFVFTGKRDTVQCFSCGGSLGNWEEGDDPWKEHAKWFPKCEFLQSKKSSEEIAQYIQGYEGFVHVTGEHFVNSWVRRELPMVSAYCNDSVFANEELRMDTFKDWPHESPVAVDALVRAGLFYTGKKGIVQCFSCGGCMEKCTEGDDPIQEHNKFFPNCVFLQTPKSSAEVIPALQSHCALPEAMETTSESNHDDPAAVHSTVVGLGRSEAQWFQEARSLSEQLRDNYTKATFRHMNLPEVCSSLGTDHLIGCDVSIISKHISQPVQGALTIPEVFSNLSSVMCVEGETGSGKTTFLKRIAFLWASGCCPLLYRFQLVFYLSLSSITPDQGLANIICAQLLGAGGCISEVCLSSIIQQLQHQVLFLLDDYSGLASLPQALHTLITKNYLSRTCLLIAVHTNRVRGIRSYLDTSLEIKEFPLSNTVYILKKFFSHNIKRLLEFMVYFGQNEDLQGIHKTPLFVAAVCTDWFENPSDQPFQDMALFKSYMQYLSLKHKGAAKPLQATVSSCGQLALTGLFSSCFEFNSDDLAEAGVDEDEELTTCLMSKFTAQRLRPVYRFLGPLFQEFLAAMRLTELLSSDRQEDQDLGLYYLRQINSPLKALTTYNNFLKYVFSHPSSKAGPTVVSHLLHLVDETELLENTYKNEDYVNHPPGTSRIMKGLKELWLLSPEYYSSFVSEHLLRIALNFAYESNTVAECSPFILQFLRGRTLALKVLNLQYFRDHPESLLLVKSLEVSINGNKVPKVVDYSVMEKSFETLQPPTIDQDYASAFEQMKEHEKNLSENEETIKSIKNIFPLQPPKISSGYWKLSPKPCKIPRLEVGVTNMGPADQALLQVLMEVFSASQSIEFRLSDSSGFLESIRPALELSKASVTKCSMSRLELSRAEQELLLTLPALQSLEVSETNQLPDQLFHNLHKFLGLKELCVRLDGKPDVLSVLPGEFPNLLHMEKLSIRTSMESDLSKLVKLIQNSPNLHVFHLKCDFLSNCDSLMAVLASCKKLREIEFSGRCFEAMPFVNILPNFISLKILNLISQQFPDKETSEKFAQALGSLRNLEELLVPTGDGIHQVAKLIVRQCLQLPCLRVLAFHYILDNDSVIEIARVATSGGFQKLEKLDLSMNHKITEEGYRNFFQALDNLPNLQNLNICRHIPECIQVQATTVKALGQCVSRLPSLTRLHMLSWLLDEEDMKVINDVKERHPQSKRLIIFWKWIVPFSPVVLE.

BIR repeat units follow at residues 63–128, 162–228, and 281–346; these read RLKT…EFLQ, RLES…EFLQ, and RMDT…VFLQ. Residues Cys-315, Cys-318, His-335, and Cys-342 each coordinate Zn(2+). The NACHT domain maps to 464-758; it reads SVMCVEGETG…EFLAAMRLTE (295 aa). Lys-476 provides a ligand contact to ATP.

Interacts (via NACHT domain) with APAF1 (via CARD and NACHT domains).

Functionally, anti-apoptotic protein which acts by inhibiting the activities of CASP3, CASP7 and CASP9. Can inhibit the autocleavage of pro-CASP9 and cleavage of pro-CASP3 by CASP9. Capable of inhibiting CASP9 autoproteolysis at 'Asp-315' and decreasing the rate of auto proteolysis at 'Asp-330'. Acts as a mediator of neuronal survival in pathological conditions. Prevents motor-neuron apoptosis induced by a variety of signals. This Mus musculus (Mouse) protein is Baculoviral IAP repeat-containing protein 1a (Naip1).